Here is a 455-residue protein sequence, read N- to C-terminus: Argininosuccinate lyase (455 aa).

Belongs to the lyase 1 family. Argininosuccinate lyase subfamily.

The protein localises to the cytoplasm. It carries out the reaction 2-(N(omega)-L-arginino)succinate = fumarate + L-arginine. The protein operates within amino-acid biosynthesis; L-arginine biosynthesis; L-arginine from L-ornithine and carbamoyl phosphate: step 3/3. The chain is Argininosuccinate lyase from Shewanella sp. (strain MR-7).